The sequence spans 299 residues: Regucalcin (299 aa).

Residue Glu18 participates in a divalent metal cation binding. 3 residues coordinate substrate: Arg101, Asn103, and Glu121. Asn154 and Asp204 together coordinate a divalent metal cation. The active-site Proton donor/acceptor is Asp204.

This sequence belongs to the SMP-30/CGR1 family. Zn(2+) is required as a cofactor. Mn(2+) serves as cofactor. The cofactor is Ca(2+). Requires Mg(2+) as cofactor. Expressed in the liver, and in the pronephros from the late tadpole stage.

Its subcellular location is the cytoplasm. It carries out the reaction D-glucono-1,5-lactone + H2O = D-gluconate + H(+). The protein operates within cofactor biosynthesis; L-ascorbate biosynthesis via UDP-alpha-D-glucuronate pathway; L-ascorbate from UDP-alpha-D-glucuronate: step 3/4. Functionally, gluconolactonase with low activity towards other sugar lactones, including gulonolactone and galactonolactone. Catalyzes a key step in ascorbic acid (vitamin C) biosynthesis. Can also hydrolyze diisopropyl phosphorofluoridate and phenylacetate (in vitro). Calcium-binding protein. Modulates Ca(2+) signaling, and Ca(2+)-dependent cellular processes and enzyme activities. This Xenopus laevis (African clawed frog) protein is Regucalcin.